A 231-amino-acid polypeptide reads, in one-letter code: TATA-box-binding protein (231 aa).

Repeat copies occupy residues 58 to 134 (LQNI…ARII) and 148 to 225 (IQNI…YPVL).

This sequence belongs to the TBP family. Belongs to the TFIID complex together with the TBP-associated factors (TAFs). Binds DNA as monomer.

It is found in the nucleus. Its function is as follows. General transcription factor that functions at the core of the DNA-binding multiprotein factor TFIID. Binding of TFIID to the TATA box is the initial transcriptional step of the pre-initiation complex (PIC), playing a role in the activation of eukaryotic genes transcribed by RNA polymerase II. The protein is TATA-box-binding protein (tbp1) of Schizosaccharomyces pombe (strain 972 / ATCC 24843) (Fission yeast).